A 406-amino-acid chain; its full sequence is Ribonuclease D (406 aa).

The 3'-5' exonuclease domain maps to 26–193; the sequence is LITQTTDLEI…VYLLLKKQLE (168 aa). Positions 231–312 constitute an HRDC domain; it reads KPRELAVLQK…HEGLEVDLAT (82 aa).

The protein belongs to the RNase D family. A divalent metal cation serves as cofactor.

The protein resides in the cytoplasm. It carries out the reaction Exonucleolytic cleavage that removes extra residues from the 3'-terminus of tRNA to produce 5'-mononucleotides.. Its function is as follows. Exonuclease involved in the 3' processing of various precursor tRNAs. Initiates hydrolysis at the 3'-terminus of an RNA molecule and releases 5'-mononucleotides. This chain is Ribonuclease D, found in Bartonella henselae (strain ATCC 49882 / DSM 28221 / CCUG 30454 / Houston 1) (Rochalimaea henselae).